A 243-amino-acid chain; its full sequence is Bidirectional sugar transporter SWEET2a (243 aa).

Positions 1–15 (MMNALGLSVAATSTG) are cleaved as a signal peptide. Over 16–24 (SPFHDVCCY) the chain is Extracellular. The helical transmembrane segment at 25–45 (GAGIAGNIFALVLFISPLPTF) threads the bilayer. The region spanning 27–112 (GIAGNIFALV…ATFIAFADAK (86 aa)) is the MtN3/slv 1 domain. Residues 46-56 (KRIVRNGSTEQ) lie on the Cytoplasmic side of the membrane. The helical transmembrane segment at 57-79 (FSAMPYIYSLLNCLICLWYGLPF) threads the bilayer. Residues 80-90 (VSYGVVLVATV) are Extracellular-facing. A helical membrane pass occupies residues 91–111 (NSIGALFQLAYTATFIAFADA). The Cytoplasmic portion of the chain corresponds to 112 to 118 (KNRVKVS). The chain crosses the membrane as a helical span at residues 119-139 (SLLVMVFGVFALIVYVSLALF). Residues 140–146 (DHQTRQL) lie on the Extracellular side of the membrane. A helical transmembrane segment spans residues 147 to 167 (FVGYLSVASLIFMFASPLSII). One can recognise a MtN3/slv 2 domain in the interval 147 to 229 (FVGYLSVASL…QLVLYGYFRK (83 aa)). Residues 168 to 180 (NLVIRTKSVEYMP) lie on the Cytoplasmic side of the membrane. The chain crosses the membrane as a helical span at residues 181-201 (FYLSLSMFLMSVSFFAYGVLL). At 202 to 203 (HD) the chain is on the extracellular side. The chain crosses the membrane as a helical span at residues 204-224 (FFIYIPNGIGTVLGVIQLVLY). The Cytoplasmic portion of the chain corresponds to 225 to 243 (GYFRKGSREDSLPLLVTHT).

Belongs to the SWEET sugar transporter family. In terms of assembly, forms homooligomers and/or heterooligomers.

The protein localises to the cell membrane. In terms of biological role, mediates both low-affinity uptake and efflux of sugar across the plasma membrane. This chain is Bidirectional sugar transporter SWEET2a (SWEET2A), found in Oryza sativa subsp. indica (Rice).